A 521-amino-acid polypeptide reads, in one-letter code: Probable cytochrome P450 12d1 proximal, mitochondrial (521 aa).

Residues 1–19 (MNTLSSARSVAIYVGPVRS) constitute a mitochondrion transit peptide. Cys-467 provides a ligand contact to heme.

It belongs to the cytochrome P450 family. Heme serves as cofactor.

The protein resides in the mitochondrion membrane. This chain is Probable cytochrome P450 12d1 proximal, mitochondrial (Cyp12d1-p), found in Drosophila melanogaster (Fruit fly).